Reading from the N-terminus, the 993-residue chain is ATP-dependent DNA helicase MPH1 (993 aa).

In terms of domain architecture, Helicase ATP-binding spans 94 to 261; the sequence is IVHKSLFQNT…EVVNNLDISK (168 aa). Residue 107–114 participates in ATP binding; the sequence is IPTGMGKT. The DEAH box motif lies at 209-212; sequence DEAH. The region spanning 507-655 is the Helicase C-terminal domain; it reads KVERLHRQEQ…CIDYKKSDRI (149 aa). Positions 530 to 551 are disordered; sequence NDKLERSARRTGSSEEAQISGM. Over residues 539 to 551 the composition is skewed to polar residues; the sequence is RTGSSEEAQISGM. The tract at residues 751–810 is FKH1-binding region; it reads LVTSNENPSKKRKIFKALDNLENDSTEEASSSLETEDEEVSDDNNVFIAEGQNGCQKDLE. 2 positions are modified to phosphothreonine: Thr776 and Thr785.

It belongs to the DEAD box helicase family. DEAH subfamily. FANCM sub-subfamily. As to quaternary structure, interacts with the MHF histone-fold complex composed of MHF1 and MHF2 to form the FANCM-MHF complex. Interacts with FHK1. Phosphorylation at both Thr-776 and Thr-785 is required for the interaction with FKH1.

It localises to the nucleus. It carries out the reaction ATP + H2O = ADP + phosphate + H(+). ATP-dependent DNA helicase involved in DNA damage repair by homologous recombination and in genome maintenance. Capable of unwinding D-loops. Plays a role in limiting crossover recombinants during mitotic DNA double-strand break (DSB) repair. Prevents crossovers between ectopic sequences by removing substrates for MUS81-MMS4 or RAD1-RAD10 cleavage. Component of a FANCM-MHF complex which promotes gene conversion at blocked replication forks, probably by reversal of the stalled fork. Binds to flap-structured DNA but not to non-flap nicked DNA, and participates in Okazaki fragment processing by stimulating the endonuclease activities of FEN1 and DNA2. Involved in recombination donor preference during mating-type switching via interaction with FKH1. The chain is ATP-dependent DNA helicase MPH1 from Saccharomyces cerevisiae (strain ATCC 204508 / S288c) (Baker's yeast).